Reading from the N-terminus, the 520-residue chain is 2,3-bisphosphoglycerate-independent phosphoglycerate mutase (520 aa).

The Mn(2+) site is built by aspartate 13 and serine 63. The active-site Phosphoserine intermediate is the serine 63. Substrate is bound by residues histidine 124, arginine 154–aspartate 155, arginine 192, arginine 198, arginine 268–arginine 271, and lysine 342. Aspartate 409, histidine 413, aspartate 450, histidine 451, and histidine 469 together coordinate Mn(2+).

The protein belongs to the BPG-independent phosphoglycerate mutase family. As to quaternary structure, monomer. The cofactor is Mn(2+).

It carries out the reaction (2R)-2-phosphoglycerate = (2R)-3-phosphoglycerate. The protein operates within carbohydrate degradation; glycolysis; pyruvate from D-glyceraldehyde 3-phosphate: step 3/5. Catalyzes the interconversion of 2-phosphoglycerate and 3-phosphoglycerate. In Colwellia psychrerythraea (strain 34H / ATCC BAA-681) (Vibrio psychroerythus), this protein is 2,3-bisphosphoglycerate-independent phosphoglycerate mutase.